A 196-amino-acid chain; its full sequence is Xanthine phosphoribosyltransferase (196 aa).

2 residues coordinate xanthine: leucine 26 and asparagine 33. A 5-phospho-alpha-D-ribose 1-diphosphate-binding site is contributed by 134 to 138; sequence ASGEA. Residue lysine 162 participates in xanthine binding.

This sequence belongs to the purine/pyrimidine phosphoribosyltransferase family. Xpt subfamily. As to quaternary structure, homodimer.

The protein localises to the cytoplasm. It catalyses the reaction XMP + diphosphate = xanthine + 5-phospho-alpha-D-ribose 1-diphosphate. Its pathway is purine metabolism; XMP biosynthesis via salvage pathway; XMP from xanthine: step 1/1. Converts the preformed base xanthine, a product of nucleic acid breakdown, to xanthosine 5'-monophosphate (XMP), so it can be reused for RNA or DNA synthesis. This chain is Xanthine phosphoribosyltransferase, found in Moorella thermoacetica (strain ATCC 39073 / JCM 9320).